The primary structure comprises 107 residues: Keratin, type I cytoskeletal 20 (107 aa).

The interval 1 to 7 is head; it reads GNLWVGN. A coil 1A region spans residues 8-43; it reads EKMTMKNLNDRLASYLEKVRSLEQSNSKFELQIKQW. Residues 8 to 107 enclose the IF rod domain; the sequence is EKMTMKNLND…ETERGIRLAV (100 aa). The tract at residues 44–61 is linker 1; sequence YESNTPGISRDHSAYLQQ. The coil 1B stretch occupies residues 62–107; that stretch reads IQDLRNQIRDAQLQNARCVLQIDNAKLAAEDFRLKYETERGIRLAV.

It belongs to the intermediate filament family. In terms of assembly, heterotetramer of two type I and two type II keratins. Associates with KRT8.

Functionally, plays a significant role in maintaining keratin filament organization in intestinal epithelia. When phosphorylated, plays a role in the secretion of mucin in the small intestine. This Sus scrofa (Pig) protein is Keratin, type I cytoskeletal 20.